The sequence spans 417 residues: UPF0761 membrane protein Veis_3782 (417 aa).

The next 6 helical transmembrane spans lie at 54–74 (ILAL…FPIF), 111–131 (GLGL…ILTI), 151–171 (VLIY…SLAL), 192–212 (FLFD…LYHY), 226–246 (GGLF…LYLG), and 261–281 (LPIL…GAVV).

This sequence belongs to the UPF0761 family.

It localises to the cell inner membrane. This chain is UPF0761 membrane protein Veis_3782, found in Verminephrobacter eiseniae (strain EF01-2).